Here is a 453-residue protein sequence, read N- to C-terminus: Kynureninase (453 aa).

Residues Leu114, Thr115, 142–145 (FPSD), Asp232, His235, and Tyr257 contribute to the pyridoxal 5'-phosphate site. Lys258 is subject to N6-(pyridoxal phosphate)lysine. Residue Trp286 coordinates pyridoxal 5'-phosphate.

Belongs to the kynureninase family. In terms of assembly, homodimer. The cofactor is pyridoxal 5'-phosphate.

The protein resides in the cytoplasm. It carries out the reaction L-kynurenine + H2O = anthranilate + L-alanine + H(+). It catalyses the reaction 3-hydroxy-L-kynurenine + H2O = 3-hydroxyanthranilate + L-alanine + H(+). The protein operates within amino-acid degradation; L-kynurenine degradation; L-alanine and anthranilate from L-kynurenine: step 1/1. It functions in the pathway cofactor biosynthesis; NAD(+) biosynthesis; quinolinate from L-kynurenine: step 2/3. In terms of biological role, catalyzes the cleavage of L-kynurenine (L-Kyn) and L-3-hydroxykynurenine (L-3OHKyn) into anthranilic acid (AA) and 3-hydroxyanthranilic acid (3-OHAA), respectively. The sequence is that of Kynureninase from Cryptococcus neoformans var. neoformans serotype D (strain B-3501A) (Filobasidiella neoformans).